The primary structure comprises 87 residues: UPF0250 protein BCc_307 (87 aa).

The protein belongs to the UPF0250 family.

The chain is UPF0250 protein BCc_307 from Buchnera aphidicola subsp. Cinara cedri (strain Cc).